The primary structure comprises 275 residues: NH(3)-dependent NAD(+) synthetase (275 aa).

Residue Gly47–Ser54 coordinates ATP. Asp53 serves as a coordination point for Mg(2+). Residue Arg141 coordinates deamido-NAD(+). Position 161 (Thr161) interacts with ATP. Glu166 is a Mg(2+) binding site. Residues Lys174 and Asp181 each coordinate deamido-NAD(+). Positions 190 and 212 each coordinate ATP. His261–Lys262 is a deamido-NAD(+) binding site.

Belongs to the NAD synthetase family. As to quaternary structure, homodimer.

The catalysed reaction is deamido-NAD(+) + NH4(+) + ATP = AMP + diphosphate + NAD(+) + H(+). Its pathway is cofactor biosynthesis; NAD(+) biosynthesis; NAD(+) from deamido-NAD(+) (ammonia route): step 1/1. Catalyzes the ATP-dependent amidation of deamido-NAD to form NAD. Uses ammonia as a nitrogen source. This chain is NH(3)-dependent NAD(+) synthetase, found in Latilactobacillus sakei subsp. sakei (strain 23K) (Lactobacillus sakei subsp. sakei).